Reading from the N-terminus, the 66-residue chain is Stress-associated endoplasmic reticulum protein 1 (66 aa).

The tract at residues 1–31 (MVAKQRIRMANEKHSKNITQRGNVAKTSRNA) is disordered. Positions 17-30 (NITQRGNVAKTSRN) are enriched in polar residues. A helical transmembrane segment spans residues 39-59 (GPWLLALFIFVVCGSAIFQII).

It belongs to the RAMP4 family. Interacts with SEC61B, SEC61A1 and the SEC61 complex. Interacts with CANX.

It localises to the membrane. Its subcellular location is the endoplasmic reticulum membrane. Interacts with target proteins during their translocation into the lumen of the endoplasmic reticulum. Protects unfolded target proteins against degradation during ER stress. May facilitate glycosylation of target proteins after termination of ER stress. May modulate the use of N-glycosylation sites on target proteins. This Bos taurus (Bovine) protein is Stress-associated endoplasmic reticulum protein 1 (SERP1).